The chain runs to 240 residues: Fatty acid metabolism regulator protein (240 aa).

In terms of domain architecture, HTH gntR-type spans 6 to 74; that stretch reads KGPASFAEKY…HGKPTRVNNF (69 aa). The H-T-H motif DNA-binding region spans 34–53; that stretch reads ERELSELIGVTRTTLREVLQ.

Homodimer.

The protein localises to the cytoplasm. Its function is as follows. Multifunctional regulator of fatty acid metabolism. This Shewanella amazonensis (strain ATCC BAA-1098 / SB2B) protein is Fatty acid metabolism regulator protein.